Consider the following 562-residue polypeptide: MNSDSVENLFISRISKDDPEAIFQIVEVVGSGSFGTVCACRWMKKKDRESNGNRLIACKFVEVNADDVETNLNLVKEIDILKESMDCPYIVEYKGCYLKSSMLLIVMEYCKGGSLLDIIELCGKRLIEEEIAAVCAGVVKGLVYLHSKRTTHRDIKAGNVLLDEEGLPKLADFGVSTIAEQGQKMNTVIGSPYWMAPEIIMGQGYDQKADIWSLGITAIEIAELVPPRFDVPPSRVIFTIPHQPPPSLKIPSDWSPEFNDFVKQCLSMNPALRPSAQQLLSHPFILKGSSQQILQKLVNESIPLLKEKRAEKIRQLEEQEQQRNSSGSKMVSSVPTRASQALTNVRNAESLKGSVVILNSNTKTASIMRNKNPQPPPPSHSSGAGGAAGSTRRVPGNKSVLNRYPPANNVSNGTIAPSPINNNNNNNNTTTKVGKVSSPFLQQQQQQQQQNNNKNPPPKPTTPSPNKKIGDNISKTTPTTPTTTQPNTSTTTKTGSSLNIKPTNNVNRSTISIGQQKSPLQSSEREASYDEESVSVIYHGSEDEEDEEEFNHEDYEEINVNI.

In terms of domain architecture, Protein kinase spans 23–285; it reads FQIVEVVGSG…AQQLLSHPFI (263 aa). ATP is bound by residues 29 to 37 and Lys-59; that span reads VGSGSFGTV. Catalysis depends on Asp-154, which acts as the Proton acceptor. 2 disordered regions span residues 316–339 and 366–562; these read LEEQ…TRAS and SIMR…NVNI. Polar residues predominate over residues 322-339; that stretch reads QRNSSGSKMVSSVPTRAS. Composition is skewed to low complexity over residues 421–431, 442–454, and 476–494; these read NNNNNNNNTTT, QQQQ…NNNK, and TTPT…TTKT. Residues 495-522 show a composition bias toward polar residues; it reads GSSLNIKPTNNVNRSTISIGQQKSPLQS. Acidic residues predominate over residues 542-562; sequence EDEEDEEEFNHEDYEEINVNI.

The protein belongs to the protein kinase superfamily. STE Ser/Thr protein kinase family. STE20 subfamily. Requires Mg(2+) as cofactor.

The enzyme catalyses L-seryl-[protein] + ATP = O-phospho-L-seryl-[protein] + ADP + H(+). The catalysed reaction is L-threonyl-[protein] + ATP = O-phospho-L-threonyl-[protein] + ADP + H(+). The chain is Serine/threonine-protein kinase dst3 from Dictyostelium discoideum (Social amoeba).